Reading from the N-terminus, the 441-residue chain is Trigger factor (441 aa).

The region spanning 161–246 is the PPIase FKBP-type domain; it reads GDKVTIDFLG…VHEVLGEKLP (86 aa).

The protein belongs to the FKBP-type PPIase family. Tig subfamily.

It localises to the cytoplasm. It catalyses the reaction [protein]-peptidylproline (omega=180) = [protein]-peptidylproline (omega=0). Functionally, involved in protein export. Acts as a chaperone by maintaining the newly synthesized protein in an open conformation. Functions as a peptidyl-prolyl cis-trans isomerase. This Teredinibacter turnerae (strain ATCC 39867 / T7901) protein is Trigger factor.